The following is a 40-amino-acid chain: uncharacterized protein (40 aa).

The signal sequence occupies residues 1–17 (MAVAALAMYGGTCGACA).

This is an uncharacterized protein from Archaeoglobus fulgidus (strain ATCC 49558 / DSM 4304 / JCM 9628 / NBRC 100126 / VC-16).